The sequence spans 143 residues: Potassium voltage-gated channel subfamily E regulatory beta subunit 5 (143 aa).

2 N-linked (GlcNAc...) asparagine glycosylation sites follow: asparagine 2 and asparagine 25. A helical transmembrane segment spans residues 61-81 (LYILLIMIFYACLAGGLILAY). Residues 82-143 (TRSRKLVEAK…PALAQGAERV (62 aa)) lie on the Cytoplasmic side of the membrane.

It belongs to the potassium channel KCNE family. Interacts with KCNQ1; impairs KCNQ1 localization in lipid rafts and only conducts current upon strong and continued depolarization. Detected in embryonal dorsal root and nerve ganglia, in the somites and in myoepicardial layer of the developing heart wall. Detected at lower levels in the central nervous system (CNS) and in developing limb.

Its subcellular location is the membrane. In terms of biological role, potassium channel ancillary subunit that is essential for generation of some native K(+) currents by virtue of formation of heteromeric ion channel complex with voltage-gated potassium (Kv) channel pore-forming alpha subunits. Functions as an inhibitory beta-subunit of the repolarizing cardiac potassium ion channel KCNQ1. This Mus musculus (Mouse) protein is Potassium voltage-gated channel subfamily E regulatory beta subunit 5 (Kcne5).